Consider the following 228-residue polypeptide: Ribose-5-phosphate isomerase A (228 aa).

Substrate contacts are provided by residues 29-32, 85-88, and 98-101; these read TGST, DGAD, and KGGG. E107 acts as the Proton acceptor in catalysis. Residue K125 participates in substrate binding.

The protein belongs to the ribose 5-phosphate isomerase family. In terms of assembly, homodimer.

It catalyses the reaction aldehydo-D-ribose 5-phosphate = D-ribulose 5-phosphate. It functions in the pathway carbohydrate degradation; pentose phosphate pathway; D-ribose 5-phosphate from D-ribulose 5-phosphate (non-oxidative stage): step 1/1. Functionally, catalyzes the reversible conversion of ribose-5-phosphate to ribulose 5-phosphate. In Staphylococcus aureus (strain COL), this protein is Ribose-5-phosphate isomerase A.